Reading from the N-terminus, the 439-residue chain is Adenylosuccinate synthetase (439 aa).

Residues 25 to 31 (GDEGKGK) and 53 to 55 (GHT) each bind GTP. The active-site Proton acceptor is the Asp-26. Asp-26 and Gly-53 together coordinate Mg(2+). Residues 26 to 29 (DEGK), 51 to 54 (NAGH), Thr-146, Arg-160, Asn-237, Thr-252, and Arg-316 contribute to the IMP site. His-54 acts as the Proton donor in catalysis. 312–318 (VTTGRRR) serves as a coordination point for substrate. GTP is bound by residues Arg-318, 344–346 (KLD), and 426–428 (GVG).

Belongs to the adenylosuccinate synthetase family. As to quaternary structure, homodimer. The cofactor is Mg(2+).

It localises to the cytoplasm. It catalyses the reaction IMP + L-aspartate + GTP = N(6)-(1,2-dicarboxyethyl)-AMP + GDP + phosphate + 2 H(+). Its pathway is purine metabolism; AMP biosynthesis via de novo pathway; AMP from IMP: step 1/2. Plays an important role in the de novo pathway and in the salvage pathway of purine nucleotide biosynthesis. Catalyzes the first committed step in the biosynthesis of AMP from IMP. The polypeptide is Adenylosuccinate synthetase (Mycosarcoma maydis (Corn smut fungus)).